A 523-amino-acid polypeptide reads, in one-letter code: Glycerate kinase (523 aa).

Phosphoserine is present on Ser60. Residue Lys200 is modified to N6-acetyllysine.

This sequence belongs to the glycerate kinase type-2 family. Expressed in the hippocampus, callus, brain, cerebellum, renal cortex interstitial cells, epithelium of interlobular bile duct and skeletal muscle.

The protein resides in the cytoplasm. It carries out the reaction (R)-glycerate + ATP = (2R)-3-phosphoglycerate + ADP + H(+). The chain is Glycerate kinase (Glyctk) from Mus musculus (Mouse).